A 116-amino-acid chain; its full sequence is Phage-like element PBSX protein XkdD (116 aa).

The protein is Phage-like element PBSX protein XkdD (xkdD) of Bacillus subtilis (strain 168).